We begin with the raw amino-acid sequence, 695 residues long: UvrABC system protein C (695 aa).

Over residues 1–10 the composition is skewed to basic and acidic residues; that stretch reads MNQDPAETRD. The disordered stretch occupies residues 1–53; the sequence is MNQDPAETRDTAAPPPADTTSPSPVSPELEPRSAPGAQDIDAASASLTVDEDD. Residues 18 to 27 show a composition bias toward low complexity; it reads DTTSPSPVSP. Positions 88 to 166 constitute a GIY-YIG domain; that stretch reads TSPGVYRMLN…IKQLRPRFNV (79 aa). The 36-residue stretch at 276–311 folds into the UVR domain; the sequence is RAVKQELAVEMEKASNELEFETAALYRDRLAALSAI.

The protein belongs to the UvrC family. Interacts with UvrB in an incision complex.

The protein resides in the cytoplasm. The UvrABC repair system catalyzes the recognition and processing of DNA lesions. UvrC both incises the 5' and 3' sides of the lesion. The N-terminal half is responsible for the 3' incision and the C-terminal half is responsible for the 5' incision. This is UvrABC system protein C from Rhodopseudomonas palustris (strain BisB5).